Reading from the N-terminus, the 320-residue chain is 4-diphosphocytidyl-2-C-methyl-D-erythritol kinase (320 aa).

Residue lysine 26 is part of the active site. Position 111–121 (111–121 (PVAGGMAGGSA)) interacts with ATP. Residue aspartate 153 is part of the active site.

The protein belongs to the GHMP kinase family. IspE subfamily.

It carries out the reaction 4-CDP-2-C-methyl-D-erythritol + ATP = 4-CDP-2-C-methyl-D-erythritol 2-phosphate + ADP + H(+). It participates in isoprenoid biosynthesis; isopentenyl diphosphate biosynthesis via DXP pathway; isopentenyl diphosphate from 1-deoxy-D-xylulose 5-phosphate: step 3/6. Functionally, catalyzes the phosphorylation of the position 2 hydroxy group of 4-diphosphocytidyl-2C-methyl-D-erythritol. In Mycobacterium marinum (strain ATCC BAA-535 / M), this protein is 4-diphosphocytidyl-2-C-methyl-D-erythritol kinase.